A 221-amino-acid chain; its full sequence is Ethylene-inducing xylanase 4 (221 aa).

Positions 1–19 (MVSFSTLLTACTAITGALG) are cleaved as a signal peptide. The region spanning 28–218 (NVTPNAQGTH…SAGRASVVVE (191 aa)) is the GH11 domain. N-linked (GlcNAc...) asparagine glycosylation is present at N96. Residue E114 is the Nucleophile of the active site. The active-site Proton donor is the E205.

The protein belongs to the glycosyl hydrolase 11 (cellulase G) family.

The enzyme catalyses Endohydrolysis of (1-&gt;4)-beta-D-xylosidic linkages in xylans.. It participates in glycan degradation; xylan degradation. In terms of biological role, endo-1,4-beta-xylanase involved in the hydrolysis of xylan, a major structural heterogeneous polysaccharide found in plant biomass representing the second most abundant polysaccharide in the biosphere, after cellulose. May act as an elicitor of plant defense responses in certain plants but does not exhibit any cell death when transiently expressed in N.benthamiana. The polypeptide is Ethylene-inducing xylanase 4 (Verticillium dahliae (strain VdLs.17 / ATCC MYA-4575 / FGSC 10137) (Verticillium wilt)).